The chain runs to 436 residues: Trigger factor (436 aa).

In terms of domain architecture, PPIase FKBP-type spans 163 to 248 (GDRVVLDFAG…VKEVAEGVLP (86 aa)).

It belongs to the FKBP-type PPIase family. Tig subfamily.

The protein localises to the cytoplasm. It carries out the reaction [protein]-peptidylproline (omega=180) = [protein]-peptidylproline (omega=0). In terms of biological role, involved in protein export. Acts as a chaperone by maintaining the newly synthesized protein in an open conformation. Functions as a peptidyl-prolyl cis-trans isomerase. This is Trigger factor from Bordetella pertussis (strain Tohama I / ATCC BAA-589 / NCTC 13251).